A 660-amino-acid chain; its full sequence is UvrABC system protein B (660 aa).

A Helicase ATP-binding domain is found at Glu-25–Asn-183. Residue Gly-38 to Thr-45 participates in ATP binding. The Beta-hairpin motif lies at Tyr-91–Val-114. The Helicase C-terminal domain maps to Gln-431–Leu-593. Positions Ala-622–Thr-657 constitute a UVR domain.

It belongs to the UvrB family. In terms of assembly, forms a heterotetramer with UvrA during the search for lesions. Interacts with UvrC in an incision complex.

The protein localises to the cytoplasm. In terms of biological role, the UvrABC repair system catalyzes the recognition and processing of DNA lesions. A damage recognition complex composed of 2 UvrA and 2 UvrB subunits scans DNA for abnormalities. Upon binding of the UvrA(2)B(2) complex to a putative damaged site, the DNA wraps around one UvrB monomer. DNA wrap is dependent on ATP binding by UvrB and probably causes local melting of the DNA helix, facilitating insertion of UvrB beta-hairpin between the DNA strands. Then UvrB probes one DNA strand for the presence of a lesion. If a lesion is found the UvrA subunits dissociate and the UvrB-DNA preincision complex is formed. This complex is subsequently bound by UvrC and the second UvrB is released. If no lesion is found, the DNA wraps around the other UvrB subunit that will check the other stand for damage. This chain is UvrABC system protein B, found in Methanococcoides burtonii (strain DSM 6242 / NBRC 107633 / OCM 468 / ACE-M).